A 229-amino-acid polypeptide reads, in one-letter code: Potassium/proton antiporter CemA (229 aa).

3 consecutive transmembrane segments (helical) span residues 6-26 (AFIPFFYFTSIVFLPWLISLC), 107-127 (ILHFSTNLISFVILSGYSFWG), and 189-209 (ILSGLVSTFPVILDTIFKYWI).

Belongs to the CemA family.

It is found in the plastid. It localises to the chloroplast inner membrane. The catalysed reaction is K(+)(in) + H(+)(out) = K(+)(out) + H(+)(in). Functionally, contributes to K(+)/H(+) antiport activity by supporting proton efflux to control proton extrusion and homeostasis in chloroplasts in a light-dependent manner to modulate photosynthesis. Prevents excessive induction of non-photochemical quenching (NPQ) under continuous-light conditions. Indirectly promotes efficient inorganic carbon uptake into chloroplasts. The chain is Potassium/proton antiporter CemA from Olimarabidopsis pumila (Dwarf rocket).